A 210-amino-acid chain; its full sequence is Large ribosomal subunit protein bL25 (210 aa).

Positions 190–210 (LKSEGAEGGEAEAGQAEEGEE) are disordered. A compositionally biased stretch (acidic residues) spans 196-210 (EGGEAEAGQAEEGEE).

This sequence belongs to the bacterial ribosomal protein bL25 family. CTC subfamily. As to quaternary structure, part of the 50S ribosomal subunit; part of the 5S rRNA/L5/L18/L25 subcomplex. Contacts the 5S rRNA. Binds to the 5S rRNA independently of L5 and L18.

Its function is as follows. This is one of the proteins that binds to the 5S RNA in the ribosome where it forms part of the central protuberance. In Chelativorans sp. (strain BNC1), this protein is Large ribosomal subunit protein bL25.